The primary structure comprises 345 residues: L-threonine 3-dehydrogenase (345 aa).

C42 provides a ligand contact to Zn(2+). Active-site charge relay system residues include T44 and H47. Zn(2+) contacts are provided by H67, E68, C97, C100, C103, and C111. Residues I179, D199, R204, 266–268, and 290–291 contribute to the NAD(+) site; these read LGI and IY.

This sequence belongs to the zinc-containing alcohol dehydrogenase family. In terms of assembly, homotetramer. It depends on Zn(2+) as a cofactor.

Its subcellular location is the cytoplasm. It carries out the reaction L-threonine + NAD(+) = (2S)-2-amino-3-oxobutanoate + NADH + H(+). It participates in amino-acid degradation; L-threonine degradation via oxydo-reductase pathway; glycine from L-threonine: step 1/2. Its function is as follows. Catalyzes the NAD(+)-dependent oxidation of L-threonine to 2-amino-3-ketobutyrate. This Sinorhizobium fredii (strain NBRC 101917 / NGR234) protein is L-threonine 3-dehydrogenase.